Reading from the N-terminus, the 276-residue chain is D-apionate oxidoisomerase (276 aa).

NAD(+) is bound by residues 12-14, glutamate 33, and aspartate 69; that span reads GKM. Zn(2+) is bound by residues histidine 114 and glutamate 184.

It belongs to the ApnO family. Requires Zn(2+) as cofactor.

The catalysed reaction is D-apionate + NAD(+) = 3-oxoisoapionate + NADH + H(+). It functions in the pathway carbohydrate metabolism. In terms of biological role, involved in catabolism of D-apiose. Catalyzes the conversion of D-apionate to 3-oxo-isoapionate. The polypeptide is D-apionate oxidoisomerase (Cupriavidus necator (strain ATCC 43291 / DSM 13513 / CCUG 52238 / LMG 8453 / N-1) (Ralstonia eutropha)).